The following is a 426-amino-acid chain: Serine--tRNA ligase (426 aa).

L-serine is bound at residue 233 to 235 (TAE). 264-266 (RSE) is an ATP binding site. Glu287 contacts L-serine. 351–354 (EISS) lines the ATP pocket. Ser387 contributes to the L-serine binding site.

Belongs to the class-II aminoacyl-tRNA synthetase family. Type-1 seryl-tRNA synthetase subfamily. As to quaternary structure, homodimer. The tRNA molecule binds across the dimer.

It is found in the cytoplasm. The catalysed reaction is tRNA(Ser) + L-serine + ATP = L-seryl-tRNA(Ser) + AMP + diphosphate + H(+). It catalyses the reaction tRNA(Sec) + L-serine + ATP = L-seryl-tRNA(Sec) + AMP + diphosphate + H(+). Its pathway is aminoacyl-tRNA biosynthesis; selenocysteinyl-tRNA(Sec) biosynthesis; L-seryl-tRNA(Sec) from L-serine and tRNA(Sec): step 1/1. In terms of biological role, catalyzes the attachment of serine to tRNA(Ser). Is also able to aminoacylate tRNA(Sec) with serine, to form the misacylated tRNA L-seryl-tRNA(Sec), which will be further converted into selenocysteinyl-tRNA(Sec). The polypeptide is Serine--tRNA ligase (Pseudomonas syringae pv. tomato (strain ATCC BAA-871 / DC3000)).